The chain runs to 65 residues: Ovary maturating parsin (65 aa).

Positions 17–28 (PAAPAVAPAAPA) are enriched in low complexity. A disordered region spans residues 17–36 (PAAPAVAPAAPASWPHQQRR).

In terms of assembly, monomer.

Functionally, neurohormone that anticipates ovarian maturation. Acts as a true gonadotropin and stimulates vitellogenin biosynthesis. The chain is Ovary maturating parsin from Locusta migratoria (Migratory locust).